Here is a 347-residue protein sequence, read N- to C-terminus: Epimerase family protein SDR39U1 homolog, chloroplastic (347 aa).

The N-terminal 37 residues, 1 to 37 (MELLCSPTSLSSSFALSSALLVPRSFSMPGTRRFMVL), are a transit peptide targeting the chloroplast. NADP(+) contacts are provided by residues 54–57 (TGFI), 76–77 (TR), 115–119 (LAGLP), and Arg136.

Can form homodimers. As to expression, expressed in leaves, stems and flower buds.

It localises to the plastid. The protein resides in the chloroplast inner membrane. The protein localises to the chloroplast. Putative NADP-dependent oxidoreductase that acts as a positive regulator of chloroplast division. May play a role at an early stage of the division process. The polypeptide is Epimerase family protein SDR39U1 homolog, chloroplastic (Arabidopsis thaliana (Mouse-ear cress)).